We begin with the raw amino-acid sequence, 211 residues long: MPPGPDMTLELACGQAPVCGVDEAGRGPWAGPVSAGAVILDPDRIPKGLNDSKKLSAKARAALEEEIKDVAISWCVGLASIEEIAQLNILHAAGLAMRRAVEGLAVTPAFALVDGNYAFKLPCPVKTVIKGDSLSCSIAAASILAKEARDRIMIEADALYPGYGFAGHKGYHAKVHVEGLRRLGPSPIHRLGWAPVKAALAAAAVNGELDL.

Residues 16–205 enclose the RNase H type-2 domain; sequence APVCGVDEAG…VKAALAAAAV (190 aa). Residues Asp-22, Glu-23, and Asp-114 each contribute to the a divalent metal cation site.

It belongs to the RNase HII family. Requires Mn(2+) as cofactor. Mg(2+) serves as cofactor.

The protein localises to the cytoplasm. It carries out the reaction Endonucleolytic cleavage to 5'-phosphomonoester.. Endonuclease that specifically degrades the RNA of RNA-DNA hybrids. The polypeptide is Ribonuclease HII (rnhB) (Caulobacter vibrioides (strain ATCC 19089 / CIP 103742 / CB 15) (Caulobacter crescentus)).